The sequence spans 585 residues: Zinc finger protein 496 (585 aa).

Positions methionine 1 to serine 41 are disordered. Basic and acidic residues predominate over residues alanine 11–lysine 20. Lysine 13 participates in a covalent cross-link: Glycyl lysine isopeptide (Lys-Gly) (interchain with G-Cter in SUMO2). Pro residues predominate over residues glycine 26–proline 38. The SCAN box domain maps to arginine 42–proline 124. The disordered stretch occupies residues aspartate 141 to alanine 167. Serine 182 bears the Phosphoserine mark. The region spanning serine 220–alanine 294 is the KRAB domain. The tract at residues serine 358–glutamate 397 is disordered. Residues glutamate 373–histidine 383 are compositionally biased toward basic and acidic residues. The segment covering alanine 387–glutamate 397 has biased composition (polar residues). Residues tyrosine 405–arginine 427 form a C2H2-type 1; degenerate zinc finger. 2 C2H2-type zinc fingers span residues histidine 433–histidine 455 and tyrosine 461–histidine 483. The interval histidine 483–glycine 506 is disordered. Residue lysine 494 forms a Glycyl lysine isopeptide (Lys-Gly) (interchain with G-Cter in SUMO2) linkage. C2H2-type zinc fingers lie at residues phenylalanine 520 to histidine 543 and phenylalanine 551 to histidine 573. The short motif at lysine 575 to lysine 579 is the Nuclear localization signal element.

It belongs to the krueppel C2H2-type zinc-finger protein family. In terms of assembly, interacts (via zinc-fingers) with JARID2. Interacts with NSD1.

It is found in the nucleus. Its function is as follows. DNA-binding transcription factor that can both act as an activator and a repressor. This Mus musculus (Mouse) protein is Zinc finger protein 496 (Znf496).